A 114-amino-acid chain; its full sequence is Putative antiporter subunit mnhC2 (114 aa).

3 helical membrane passes run 3 to 23, 25 to 45, and 72 to 92; these read LILL…ILSI, LIRI…IIMS, and AIVL…LVLI.

The protein belongs to the CPA3 antiporters (TC 2.A.63) subunit C family. In terms of assembly, may form a heterooligomeric complex that consists of seven subunits: mnhA2, mnhB2, mnhC2, mnhD2, mnhE2, mnhF2 and mnhG2.

It localises to the cell membrane. This Staphylococcus epidermidis (strain ATCC 12228 / FDA PCI 1200) protein is Putative antiporter subunit mnhC2 (mnhC2).